Consider the following 431-residue polypeptide: Keratin, type I cytoskeletal 20 (431 aa).

The tract at residues 1 to 23 (MDFSRQSFHRSLSSSSQGPALSM) is disordered. A head region spans residues 1 to 76 (MDFSRQSFHR…SNGSDLFGGN (76 aa)). A Phosphoserine; by MAPKAPK2, MAPKAPK3 and PKC modification is found at Ser13. Residues Ser16 and Ser26 each carry the phosphoserine modification. Residues 77 to 112 (GKLAMQNLNDRLANYLEKVRSLEQSNSRLEAQIKQW) form a coil 1A region. Positions 77 to 388 (GKLAMQNLND…RLLEGEDIKT (312 aa)) constitute an IF rod domain. Residues 113–130 (YETNAPSTIRDYSSYYAQ) form a linker 1 region. The coil 1B stretch occupies residues 131 to 222 (IKELQNQVKD…KEHQEEVEVL (92 aa)). The linker 12 stretch occupies residues 223–245 (RRQLGNNVNVEVDAAPGLNLGEI). The interval 246-384 (MNEMRQRYEV…ATYRRLLEGE (139 aa)) is coil 2. Residues 385 to 431 (DIKTTEYQLSTLEMKDIKKTRKIKTVVEEVVDGKVVSSEVKEIEESV) form a tail region.

The protein belongs to the intermediate filament family. In terms of assembly, heterotetramer of two type I and two type II keratins. Associates with KRT8. In terms of processing, hyperphosphorylation at Ser-13 occurs during the early stages of apoptosis but becomes less prominent during the later stages. Phosphorylation at Ser-13 also increases in response to stress brought on by cell injury. Proteolytically cleaved by caspases during apoptosis. Cleavage occurs at Asp-235. Expressed at low levels in the more differentiated suprabasal regions of the small intestine, and at higher levels in the colon, mainly in the upper region and in scattered cells throughout the remaining epithelium. Also expressed in epithelial cells of bladder, ileum and stomach and at lower levels in pancreas and earskin. The phosphorylated form is nearly exclusively expressed in goblet cells of the small intestine and in the lumen-proximal cells of the colon (at protein level). Also expressed in jejunum and duodenum.

Plays a significant role in maintaining keratin filament organization in intestinal epithelia. When phosphorylated, plays a role in the secretion of mucin in the small intestine. This Mus musculus (Mouse) protein is Keratin, type I cytoskeletal 20.